The chain runs to 127 residues: Flagellar assembly factor FliW (127 aa).

Belongs to the FliW family. In terms of assembly, interacts with translational regulator CsrA and flagellin(s).

It is found in the cytoplasm. Acts as an anti-CsrA protein, binds CsrA and prevents it from repressing translation of its target genes, one of which is flagellin. Binds to flagellin and participates in the assembly of the flagellum. This Campylobacter concisus (strain 13826) protein is Flagellar assembly factor FliW.